The sequence spans 384 residues: S-adenosylmethionine synthase (384 aa).

His-15 contributes to the ATP binding site. A Mg(2+)-binding site is contributed by Asp-17. A K(+)-binding site is contributed by Glu-43. Glu-56 and Gln-99 together coordinate L-methionine. The flexible loop stretch occupies residues 99 to 109 (QSPDINQGVDR). ATP is bound by residues 164–166 (DAK), 230–231 (RF), Asp-239, 245–246 (RK), Ala-262, and Lys-266. Residue Asp-239 participates in L-methionine binding. An L-methionine-binding site is contributed by Lys-270.

This sequence belongs to the AdoMet synthase family. In terms of assembly, homotetramer; dimer of dimers. Mg(2+) serves as cofactor. K(+) is required as a cofactor.

The protein resides in the cytoplasm. The enzyme catalyses L-methionine + ATP + H2O = S-adenosyl-L-methionine + phosphate + diphosphate. The protein operates within amino-acid biosynthesis; S-adenosyl-L-methionine biosynthesis; S-adenosyl-L-methionine from L-methionine: step 1/1. Its function is as follows. Catalyzes the formation of S-adenosylmethionine (AdoMet) from methionine and ATP. The overall synthetic reaction is composed of two sequential steps, AdoMet formation and the subsequent tripolyphosphate hydrolysis which occurs prior to release of AdoMet from the enzyme. This Enterobacter sp. (strain 638) protein is S-adenosylmethionine synthase.